Consider the following 60-residue polypeptide: MAVQQNKKSRSARDMRRSHDALSENALSVEKTTGEVHLRHHVSPEGVYRGRKVVDKGADE.

A disordered region spans residues M1–E60. Over residues S11–L22 the composition is skewed to basic and acidic residues.

It belongs to the bacterial ribosomal protein bL32 family.

The chain is Large ribosomal subunit protein bL32 from Pseudomonas putida (strain ATCC 700007 / DSM 6899 / JCM 31910 / BCRC 17059 / LMG 24140 / F1).